Reading from the N-terminus, the 1173-residue chain is BRCA2-interacting transcriptional repressor EMSY (1173 aa).

Residues 16–100 (CKRILRKLEL…EWSIEGRRLV (85 aa)) form the ENT domain. The segment covering 149 to 177 (STTSTPPSASAPSSSSAAVKSPRPASPAS) has biased composition (low complexity). Disordered stretches follow at residues 149 to 179 (STTSTPPSASAPSSSSAAVKSPRPASPASNV), 191 to 216 (KSVSCSDEDEKPRKRRRTSSSSSSPV), 676 to 720 (NRSA…DAPP), 797 to 816 (SAEQRESPEPSGQSAAESDA), 905 to 998 (RVCE…GAQV), 1020 to 1046 (PRAPVSSSSSSEAALKLQAESSSEKPS), and 1139 to 1173 (DYTSQRLDEEQAMEQEVDSSNDEGAAASPSADQSQ). Positions 683–693 (TTSTHTSAAAA) are enriched in low complexity. 2 stretches are compositionally biased toward low complexity: residues 911-921 (SSSSSSSSSSS) and 937-953 (SSSSAPATAASANTPHT). 2 stretches are compositionally biased toward polar residues: residues 961–976 (QAPTTHNRPNTHTQLS) and 989–998 (SSKTSSGAQV). Residues 1025 to 1040 (SSSSSSEAALKLQAES) show a composition bias toward low complexity. The segment covering 1148 to 1159 (EQAMEQEVDSSN) has biased composition (acidic residues).

As to quaternary structure, homodimer.

It localises to the nucleus. Regulator which is able to repress transcription, possibly via its interaction with a multiprotein chromatin remodeling complex that modifies the chromatin. This chain is BRCA2-interacting transcriptional repressor EMSY, found in Danio rerio (Zebrafish).